We begin with the raw amino-acid sequence, 358 residues long: MAINTDTSGKQKALTMVLNQIERSFGKGAIMRLGDATRMRVETISTGALTLDLALGGGLPKGRVIEIYGPESSGKTTVALHAIAEVQKEGGIAAFVDAEHALDPTYASALGVDIQNLLVSQPDTGESALEIVDQLVRSAAVDIVVIDSVAALVPRAEIEGDMGDAHVGLQARLMSQALRKITGNIGKSGCTVIFINQLRQKIGVTYGSPETTTGGNALKFYASVRLDIRRIQTLKKGTDEFGNRVKVKVAKNKVAPPFRIAEFDIIFGKGVSTLGCLVDLAEETGILLRKGAWYSYNGDNISQGRDNAIKYLEEKPEFAEQIKQQVREKLDKGAVVSANSVAKANEEDEEDVDLDEEE.

ATP is bound at residue 69–76; the sequence is GPESSGKT.

Belongs to the RecA family.

Its subcellular location is the cytoplasm. Its function is as follows. Can catalyze the hydrolysis of ATP in the presence of single-stranded DNA, the ATP-dependent uptake of single-stranded DNA by duplex DNA, and the ATP-dependent hybridization of homologous single-stranded DNAs. It interacts with LexA causing its activation and leading to its autocatalytic cleavage. The polypeptide is Protein RecA (Trichormus variabilis (strain ATCC 29413 / PCC 7937) (Anabaena variabilis)).